The following is a 509-amino-acid chain: Maturase K (509 aa).

The protein belongs to the intron maturase 2 family. MatK subfamily.

It is found in the plastid. Its subcellular location is the chloroplast. In terms of biological role, usually encoded in the trnK tRNA gene intron. Probably assists in splicing its own and other chloroplast group II introns. This Nicotiana clevelandii (Wild tobacco) protein is Maturase K.